A 70-amino-acid polypeptide reads, in one-letter code: U-scutigerotoxin(02)-Tl1a (70 aa).

The first 17 residues, 1-17, serve as a signal peptide directing secretion; sequence MKYILLGLLLMVVLANA.

Belongs to the scutigerotoxin-02 family. In terms of processing, contains 4 disulfide bonds. In terms of tissue distribution, expressed by the venom gland.

The protein localises to the secreted. In Thereuopoda longicornis (Long-legged centipede), this protein is U-scutigerotoxin(02)-Tl1a.